Here is a 328-residue protein sequence, read N- to C-terminus: Malate dehydrogenase (328 aa).

An NAD(+)-binding site is contributed by 11 to 17; that stretch reads GAAGQIG. Arg-94 and Arg-100 together coordinate substrate. Residues Asn-107, Gln-114, and 131–133 contribute to the NAD(+) site; that span reads VGN. Substrate contacts are provided by Asn-133 and Arg-164. His-189 (proton acceptor) is an active-site residue.

Belongs to the LDH/MDH superfamily. MDH type 2 family.

It carries out the reaction (S)-malate + NAD(+) = oxaloacetate + NADH + H(+). Catalyzes the reversible oxidation of malate to oxaloacetate. In Acinetobacter baylyi (strain ATCC 33305 / BD413 / ADP1), this protein is Malate dehydrogenase.